Consider the following 284-residue polypeptide: Tropomyosin Pen a 1.0102 (284 aa).

Positions 1–51 are disordered; the sequence is MDAIKKKMQAMKLEKDNAMDRADTLEQQNKEANNRAEKSEEEVHNLQKRMQ. Residues 1–273 adopt a coiled-coil conformation; it reads MDAIKKKMQA…KEKYKSITDE (273 aa). The segment covering 12–45 has biased composition (basic and acidic residues); it reads KLEKDNAMDRADTLEQQNKEANNRAEKSEEEVHN. 7 igE-binding regions span residues 43–57, 85–105, 133–153, 187–202, 247–284, 249–260, and 266–281; these read VHNLQKRMQQLENDL, VAALNRRIQLLEEDLERSEER, RSLSDEERMDALENQLKEARF, ESKIVELEEELRVVGN, QKLQKEVDRLEDELVNEKEKYKSITDELDQTFSELSGY, LQKEVDRLEDEL, and KYKSITDELDQTFSEL.

It belongs to the tropomyosin family. Homodimer.

Its function is as follows. Tropomyosin, in association with the troponin complex, plays a central role in the calcium dependent regulation of muscle contraction. In Penaeus aztecus (Brown shrimp), this protein is Tropomyosin Pen a 1.0102.